The sequence spans 502 residues: Ribose import ATP-binding protein RbsA (502 aa).

ABC transporter domains follow at residues 6-242 (IDMT…IARD) and 253-496 (ALGA…SGAR). ATP is bound at residue 38 to 45 (GQNGAGKS).

This sequence belongs to the ABC transporter superfamily. Ribose importer (TC 3.A.1.2.1) family. In terms of assembly, the complex is composed of an ATP-binding protein (RbsA), two transmembrane proteins (RbsC) and a solute-binding protein (RbsB).

It is found in the cell inner membrane. The catalysed reaction is D-ribose(out) + ATP + H2O = D-ribose(in) + ADP + phosphate + H(+). Part of the ABC transporter complex RbsABC involved in ribose import. Responsible for energy coupling to the transport system. The chain is Ribose import ATP-binding protein RbsA from Cereibacter sphaeroides (strain ATCC 17023 / DSM 158 / JCM 6121 / CCUG 31486 / LMG 2827 / NBRC 12203 / NCIMB 8253 / ATH 2.4.1.) (Rhodobacter sphaeroides).